Reading from the N-terminus, the 449-residue chain is Glucose-6-phosphate isomerase (449 aa).

Glutamate 291 (proton donor) is an active-site residue. Active-site residues include histidine 312 and lysine 426.

This sequence belongs to the GPI family.

It is found in the cytoplasm. It catalyses the reaction alpha-D-glucose 6-phosphate = beta-D-fructose 6-phosphate. Its pathway is carbohydrate biosynthesis; gluconeogenesis. It participates in carbohydrate degradation; glycolysis; D-glyceraldehyde 3-phosphate and glycerone phosphate from D-glucose: step 2/4. In terms of biological role, catalyzes the reversible isomerization of glucose-6-phosphate to fructose-6-phosphate. The polypeptide is Glucose-6-phosphate isomerase (Streptococcus agalactiae serotype Ia (strain ATCC 27591 / A909 / CDC SS700)).